A 34-amino-acid chain; its full sequence is QMDMRCSASVECKQKCLKAIGSIFGKCMNKKCKC.

3 cysteine pairs are disulfide-bonded: C6–C27, C12–C32, and C16–C34.

In terms of tissue distribution, expressed by the venom gland.

The protein resides in the secreted. Functionally, toxin that acts as an agonist on melanocortin receptors (MC1R, MC3R, MC5R, MC5R). After binding to MC1R, the peptide activates the hMC1R/Gs pathway, but after binding to MC4R, it is not able to activate or antagonize the MC4R/Gs pathway. Inhibits melanocyte stimulating hormone (MSH)-binding to human receptors (Ki=2.9 uM to MC1R, Ki=3.9 uM to MC3R, Ki=2.6 uM to MC4R, Ki=2.2 uM to MC5R). This toxin is structurally unrelated to the natural agonists. The chain is NU-buthitoxin-Ptr1a from Parabuthus transvaalicus (Transvaal thick-tailed scorpion).